Here is a 523-residue protein sequence, read N- to C-terminus: Translation initiation factor eIF2B subunit delta (523 aa).

The disordered stretch occupies residues 1–154 (MAAVAVAVRE…EHTQADDPTL (154 aa)). Ala-2 carries the N-acetylalanine modification. Ser-12 carries the phosphoserine modification. Over residues 31–40 (MTQEEKLQLR) the composition is skewed to basic and acidic residues. Residues 41 to 51 (KEKKQQKKKRK) show a composition bias toward basic residues. A Phosphothreonine modification is found at Thr-85. Over residues 95–120 (TKAELRAERRAKQEAERALKQARKGE) the composition is skewed to basic and acidic residues. At Ser-129 the chain carries Phosphoserine. The may bind the chemical integrated stress response (ISR) inhibitor ISRIB stretch occupies residues 170 to 179 (RKDYGSKVSL).

This sequence belongs to the eIF-2B alpha/beta/delta subunits family. In terms of assembly, component of the translation initiation factor 2B (eIF2B) complex which is a heterodecamer of two sets of five different subunits: alpha, beta, gamma, delta and epsilon. Subunits alpha, beta and delta comprise a regulatory subcomplex and subunits epsilon and gamma comprise a catalytic subcomplex. Within the complex, the hexameric regulatory complex resides at the center, with the two heterodimeric catalytic subcomplexes bound on opposite sides.

The protein localises to the cytoplasm. The protein resides in the cytosol. Its activity is regulated as follows. Activated by the chemical integrated stress response (ISR) inhibitor ISRIB which stimulates guanine nucleotide exchange factor activity for both phosphorylated and unphosphorylated eIF2. Functionally, acts as a component of the translation initiation factor 2B (eIF2B) complex, which catalyzes the exchange of GDP for GTP on eukaryotic initiation factor 2 (eIF2) gamma subunit. Its guanine nucleotide exchange factor activity is repressed when bound to eIF2 complex phosphorylated on the alpha subunit, thereby limiting the amount of methionyl-initiator methionine tRNA available to the ribosome and consequently global translation is repressed. This is Translation initiation factor eIF2B subunit delta (EIF2B4) from Oryctolagus cuniculus (Rabbit).